The chain runs to 202 residues: Transmembrane 4 L6 family member 1 (202 aa).

At 1-9 the chain is on the cytoplasmic side; the sequence is MCYVKCARY. Residues 10-30 form a helical membrane-spanning segment; it reads IGYSLVWAAVFCIVANALLYF. Residues 31-49 are Extracellular-facing; the sequence is PNGETKYATEDHLSRFVWY. Residues 50 to 70 traverse the membrane as a helical segment; it reads FAGIVGGGLLMLLPAFVFIGM. Topologically, residues 71–93 are cytoplasmic; it reads DEEDCCGCCGYENYGKRCSMLSS. A helical transmembrane segment spans residues 94–114; sequence VLAALIGIVGSAYCVIVASLG. Over 115 to 161 the chain is Extracellular; that stretch reads LAEGPKCSDAHGVWNYTFASTEGQYLLNSSMWSKCYEPKHIVEWHVT. N-linked (GlcNAc...) asparagine glycosylation is found at Asn-129 and Asn-142. Residues 162 to 182 traverse the membrane as a helical segment; sequence LFSILLAFAAVEFILCLIQVI. Residues 183-202 are Cytoplasmic-facing; sequence NGMLGGLCGYCCSRQQQYNC.

The protein belongs to the L6 tetraspanin family. Present in high molecular weight complexes in tumor cells. Interacts with SDCBP2. In terms of tissue distribution, highly expressed in skin and lung. Moderately expressed in lymph nodes and kidneys. Also present in thymic stroma and fibroblasts.

It localises to the membrane. This is Transmembrane 4 L6 family member 1 (Tm4sf1) from Mus musculus (Mouse).